Here is a 1199-residue protein sequence, read N- to C-terminus: DNA-directed RNA polymerase subunit beta (1199 aa).

Residues 1175-1199 (EEKKAHEAAAQATDGKSANSTDDKK) form a disordered region. Residues 1188 to 1199 (DGKSANSTDDKK) are compositionally biased toward polar residues.

Belongs to the RNA polymerase beta chain family. The RNAP catalytic core consists of 2 alpha, 1 beta, 1 beta' and 1 omega subunit. When a sigma factor is associated with the core the holoenzyme is formed, which can initiate transcription.

It catalyses the reaction RNA(n) + a ribonucleoside 5'-triphosphate = RNA(n+1) + diphosphate. Its function is as follows. DNA-dependent RNA polymerase catalyzes the transcription of DNA into RNA using the four ribonucleoside triphosphates as substrates. This chain is DNA-directed RNA polymerase subunit beta, found in Lacticaseibacillus paracasei (strain ATCC 334 / BCRC 17002 / CCUG 31169 / CIP 107868 / KCTC 3260 / NRRL B-441) (Lactobacillus paracasei).